We begin with the raw amino-acid sequence, 171 residues long: Putative phosphoesterase BPUM_1117 (171 aa).

Histidine 34 functions as the Proton donor in the catalytic mechanism. 2 short sequence motifs (HXTX) span residues 34–37 (HLTL) and 115–118 (HVTV). Histidine 115 (proton acceptor) is an active-site residue.

It belongs to the 2H phosphoesterase superfamily. YjcG family.

This is Putative phosphoesterase BPUM_1117 from Bacillus pumilus (strain SAFR-032).